Consider the following 362-residue polypeptide: Beta-ketoacyl-[acyl-carrier-protein] synthase III 2 (362 aa).

Residues Cys-113 and His-251 contribute to the active site. Positions 252-256 are ACP-binding; that stretch reads QANIR. Asn-281 is an active-site residue.

This sequence belongs to the thiolase-like superfamily. FabH family. As to quaternary structure, homodimer.

The protein localises to the cytoplasm. The catalysed reaction is malonyl-[ACP] + acetyl-CoA + H(+) = 3-oxobutanoyl-[ACP] + CO2 + CoA. It functions in the pathway lipid metabolism; fatty acid biosynthesis. In terms of biological role, catalyzes the condensation reaction of fatty acid synthesis by the addition to an acyl acceptor of two carbons from malonyl-ACP. Catalyzes the first condensation reaction which initiates fatty acid synthesis and may therefore play a role in governing the total rate of fatty acid production. Possesses both acetoacetyl-ACP synthase and acetyl transacylase activities. Its substrate specificity determines the biosynthesis of branched-chain and/or straight-chain of fatty acids. The polypeptide is Beta-ketoacyl-[acyl-carrier-protein] synthase III 2 (Vibrio cholerae serotype O1 (strain ATCC 39315 / El Tor Inaba N16961)).